The following is a 734-amino-acid chain: Serine protease FAM111B (734 aa).

Position 1 is an N-acetylmethionine (Met1). Basic and acidic residues-rich tracts occupy residues 1–10 and 17–32; these read MNSMKTEENK and DDQRTRPEVSKDTVMK. The interval 1 to 32 is disordered; it reads MNSMKTEENKSFSAMEDDQRTRPEVSKDTVMK. Lys284 participates in a covalent cross-link: Glycyl lysine isopeptide (Lys-Gly) (interchain with G-Cter in SUMO2). Residues 285–321 form a disordered region; it reads QNESATDEINHQSLIQSKKKVHKPKKDGETKDVEHSR. Basic and acidic residues predominate over residues 310–321; sequence KDGETKDVEHSR. Catalysis depends on charge relay system residues His490, Asp544, and Ser650. The segment at 712-734 is disordered; that stretch reads TYDEEKGKQESSLQDHQIEPMEC.

It belongs to the FAM111 family. As to expression, widely expressed.

Its function is as follows. Serine protease. This is Serine protease FAM111B from Homo sapiens (Human).